We begin with the raw amino-acid sequence, 99 residues long: Aspartyl/glutamyl-tRNA(Asn/Gln) amidotransferase subunit C (99 aa).

It belongs to the GatC family. In terms of assembly, heterotrimer of A, B and C subunits.

The enzyme catalyses L-glutamyl-tRNA(Gln) + L-glutamine + ATP + H2O = L-glutaminyl-tRNA(Gln) + L-glutamate + ADP + phosphate + H(+). It carries out the reaction L-aspartyl-tRNA(Asn) + L-glutamine + ATP + H2O = L-asparaginyl-tRNA(Asn) + L-glutamate + ADP + phosphate + 2 H(+). Allows the formation of correctly charged Asn-tRNA(Asn) or Gln-tRNA(Gln) through the transamidation of misacylated Asp-tRNA(Asn) or Glu-tRNA(Gln) in organisms which lack either or both of asparaginyl-tRNA or glutaminyl-tRNA synthetases. The reaction takes place in the presence of glutamine and ATP through an activated phospho-Asp-tRNA(Asn) or phospho-Glu-tRNA(Gln). In Albidiferax ferrireducens (strain ATCC BAA-621 / DSM 15236 / T118) (Rhodoferax ferrireducens), this protein is Aspartyl/glutamyl-tRNA(Asn/Gln) amidotransferase subunit C.